The sequence spans 293 residues: Protein PET54 (293 aa).

Its subcellular location is the mitochondrion inner membrane. In terms of biological role, activator of specific mitochondrial mRNAs. PET54 is involved in the excision of intron aI5-beta from pre-mRNA for cytochrome c oxidase I (COX1) and plays a role in promoting the translation of COX3. This chain is Protein PET54 (PET54), found in Saccharomyces cerevisiae (strain ATCC 204508 / S288c) (Baker's yeast).